We begin with the raw amino-acid sequence, 296 residues long: Protoheme IX farnesyltransferase (296 aa).

Transmembrane regions (helical) follow at residues 9–29 (VTKP…FLLA), 36–56 (YPLF…GCVF), 84–104 (AVSL…LWFG), 108–128 (LACW…SLYM), 133–153 (VYGT…GYCA), 163–183 (LILL…IAIF), 209–229 (ITLY…GGYA), 234–254 (LVVA…GYKV), and 265–285 (FGFS…DFMV).

This sequence belongs to the UbiA prenyltransferase family. Protoheme IX farnesyltransferase subfamily.

Its subcellular location is the cell inner membrane. It catalyses the reaction heme b + (2E,6E)-farnesyl diphosphate + H2O = Fe(II)-heme o + diphosphate. The protein operates within porphyrin-containing compound metabolism; heme O biosynthesis; heme O from protoheme: step 1/1. In terms of biological role, converts heme B (protoheme IX) to heme O by substitution of the vinyl group on carbon 2 of heme B porphyrin ring with a hydroxyethyl farnesyl side group. The protein is Protoheme IX farnesyltransferase of Citrobacter koseri (strain ATCC BAA-895 / CDC 4225-83 / SGSC4696).